Here is a 316-residue protein sequence, read N- to C-terminus: Elongation factor Ts, mitochondrial (316 aa).

A mitochondrion-targeting transit peptide spans 1–18 (MFARAPFVRLLSTTSRNL). The interval 245–269 (EAAESVKTQEGLRSQEGHDPNADPV) is disordered.

Belongs to the EF-Ts family.

It localises to the mitochondrion. In terms of biological role, associates with the EF-Tu.GDP complex and induces the exchange of GDP to GTP. It remains bound to the aminoacyl-tRNA.EF-Tu.GTP complex up to the GTP hydrolysis stage on the ribosome. The protein is Elongation factor Ts, mitochondrial of Caenorhabditis elegans.